The chain runs to 374 residues: CC-adding tRNA nucleotidyltransferase (374 aa).

A CTP-binding site is contributed by 39 to 42 (GAVR). 2 residues coordinate Mg(2+): Asp52 and Asp54. Residues 126-127 (RD), Asn131, 171-180 (DASRLVRAAR), and Arg209 contribute to the CTP site.

Belongs to the tRNA nucleotidyltransferase/poly(A) polymerase family. Mg(2+) is required as a cofactor.

It carries out the reaction a tRNA precursor + 2 CTP = a tRNA with a 3' CC end + 2 diphosphate. Functionally, tRNA nucleotidyltransferase involved in the synthesis of the tRNA CCA terminus. Adds the two cytidine residues to tRNA. The protein is CC-adding tRNA nucleotidyltransferase of Deinococcus radiodurans (strain ATCC 13939 / DSM 20539 / JCM 16871 / CCUG 27074 / LMG 4051 / NBRC 15346 / NCIMB 9279 / VKM B-1422 / R1).